The following is a 223-amino-acid chain: UPF0441 protein YgiB (223 aa).

Over residues 178-195 (TVPKTAMAPKPATTTTVT) the composition is skewed to low complexity. The interval 178 to 223 (TVPKTAMAPKPATTTTVTRGGFGESVAKQSTMQRGATGTSSRSMGG) is disordered. The span at 204–223 (AKQSTMQRGATGTSSRSMGG) shows a compositional bias: polar residues.

The protein belongs to the UPF0441 family.

The protein is UPF0441 protein YgiB of Escherichia coli O6:K15:H31 (strain 536 / UPEC).